Reading from the N-terminus, the 398-residue chain is RNA-binding protein rnc1 (398 aa).

The tract at residues 40-78 (KVSIPTPKPSTPLSTLTNGSTIQQSMTNQPEPTSQVPPI) is disordered. Phosphothreonine is present on threonine 50. The span at 57–76 (NGSTIQQSMTNQPEPTSQVP) shows a compositional bias: polar residues. 2 consecutive KH domains span residues 93–157 (QLTL…YRFI) and 178–243 (PRKL…IWEI). Residues 274–290 (ASTASPQQVSPPAAPST) show a composition bias toward low complexity. The segment at 274–295 (ASTASPQQVSPPAAPSTTSGEA) is disordered. In terms of domain architecture, KH 3 spans 320–385 (KVTQNISIPA…EENEKALFLL (66 aa)).

Phosphorylated by pmk1. Phosphorylation causes enhancement of the RNA-binding activity.

Its subcellular location is the cytoplasm. In terms of biological role, binds and stabilizes pmp1 mRNA and hence acts as a negative regulator of pmk1 signaling. Overexpression suppresses the Cl(-) sensitivity of calcineurin deletion. This Schizosaccharomyces pombe (strain 972 / ATCC 24843) (Fission yeast) protein is RNA-binding protein rnc1.